Consider the following 507-residue polypeptide: Arylsulfatase A (507 aa).

Residues 1 to 18 (MGAPRSLLLALAAGLAVA) form the signal peptide. Ca(2+) contacts are provided by Asp-29, Asp-30, and Cys-69. Cys-69 functions as the Nucleophile in the catalytic mechanism. Cys-69 is subject to 3-oxoalanine (Cys). Position 123 (Lys-123) interacts with substrate. The active site involves His-125. Substrate is bound at residue Ser-150. Intrachain disulfides connect Cys-156–Cys-172 and Cys-161–Cys-168. Residue Asn-158 is glycosylated (N-linked (GlcNAc...) asparagine). A glycan (N-linked (GlcNAc...) asparagine) is linked at Asn-184. Residue His-229 participates in substrate binding. Residues Asp-281 and Asn-282 each contribute to the Ca(2+) site. 4 cysteine pairs are disulfide-bonded: Cys-300–Cys-414, Cys-488–Cys-500, Cys-489–Cys-502, and Cys-493–Cys-499. Lys-302 contacts substrate. An N-linked (GlcNAc...) asparagine glycan is attached at Asn-350.

The protein belongs to the sulfatase family. Homodimer at neutral pH and homooctamer at acidic pH. Exists both as a single chain of 58 kDa (component A) or as a chain of 50 kDa (component B) linked by disulfide bond(s) to a 7 kDa chain (component C). Interacts with SUMF1. Ca(2+) serves as cofactor. Post-translationally, the conversion to 3-oxoalanine (also known as C-formylglycine, FGly), of a serine or cysteine residue in prokaryotes and of a cysteine residue in eukaryotes, is critical for catalytic activity. This post-translational modification is severely defective in multiple sulfatase deficiency (MSD).

It is found in the endoplasmic reticulum. The protein localises to the lysosome. It carries out the reaction an N-acyl-1-beta-D-(3-O-sulfo)-galactosyl-sphing-4-enine + H2O = a beta-D-galactosyl-(1&lt;-&gt;1')-N-acylsphing-4-enine + sulfate + H(+). With respect to regulation, inhibited by phosphate. The phosphate forms a covalent bond with the active site 3-oxoalanine. In terms of biological role, hydrolyzes cerebroside sulfate. The protein is Arylsulfatase A (ARSA) of Homo sapiens (Human).